Here is a 434-residue protein sequence, read N- to C-terminus: D-amino acid dehydrogenase (434 aa).

3–17 contacts FAD; sequence VLVLGSGVIGTTSAW.

It belongs to the DadA oxidoreductase family. FAD serves as cofactor.

It catalyses the reaction a D-alpha-amino acid + A + H2O = a 2-oxocarboxylate + AH2 + NH4(+). It participates in amino-acid degradation; D-alanine degradation; NH(3) and pyruvate from D-alanine: step 1/1. Functionally, oxidative deamination of D-amino acids. The protein is D-amino acid dehydrogenase of Stenotrophomonas maltophilia (strain K279a).